A 396-amino-acid chain; its full sequence is Pre-mycofactocin synthase (396 aa).

The 383-residue stretch at 1-383 (MAEAWFETVA…SPADILVPTG (383 aa)) folds into the FMN hydroxy acid dehydrogenase domain. Ser-108, Gln-128, Thr-156, and Lys-254 together coordinate FMN. The active-site Proton acceptor is His-278. FMN-binding positions include 309–313 (DGGIR) and 332–333 (GR).

It belongs to the FMN-dependent alpha-hydroxy acid dehydrogenase family. FMN is required as a cofactor.

It catalyses the reaction 3-amino-5-[(4-hydroxyphenyl)methyl]-4,4-dimethyl-2-pyrrolidin-2-one + O2 + H2O = pre-mycofactocin + H2O2 + NH4(+). Functionally, involved in the biosynthesis of the enzyme cofactor mycofactocin (MFT). Catalyzes the oxidative deamination of AHDP (3-amino-5-[(4-hydroxyphenyl)methyl]-4,4-dimethyl-2-pyrrolidin-2-one), forming an alpha-keto amide moiety on the resulting molecule, which is called pre-mycofactocin (PMFT). This reaction occurs via a 5-[(4-hydroxyphenyl)methyl]-3-imino-4,4-dimethylpyrrolidin-2-one intermediate, which converts to PMFT. The alpha-keto amide moiety is the redox-active center for the redox activity of mycofactocin. The sequence is that of Pre-mycofactocin synthase (mftD) from Mycobacterium tuberculosis (strain CDC 1551 / Oshkosh).